Consider the following 224-residue polypeptide: Deoxyribose-phosphate aldolase (224 aa).

Residue D92 is the Proton donor/acceptor of the active site. Catalysis depends on K154, which acts as the Schiff-base intermediate with acetaldehyde. K183 functions as the Proton donor/acceptor in the catalytic mechanism.

This sequence belongs to the DeoC/FbaB aldolase family. DeoC type 1 subfamily.

Its subcellular location is the cytoplasm. The enzyme catalyses 2-deoxy-D-ribose 5-phosphate = D-glyceraldehyde 3-phosphate + acetaldehyde. The protein operates within carbohydrate degradation; 2-deoxy-D-ribose 1-phosphate degradation; D-glyceraldehyde 3-phosphate and acetaldehyde from 2-deoxy-alpha-D-ribose 1-phosphate: step 2/2. Its function is as follows. Catalyzes a reversible aldol reaction between acetaldehyde and D-glyceraldehyde 3-phosphate to generate 2-deoxy-D-ribose 5-phosphate. The sequence is that of Deoxyribose-phosphate aldolase from Actinobacillus succinogenes (strain ATCC 55618 / DSM 22257 / CCUG 43843 / 130Z).